We begin with the raw amino-acid sequence, 358 residues long: Protein FAM50 homolog (358 aa).

Residues 104–113 (AKLAEKDRQK) are compositionally biased toward basic and acidic residues. The disordered stretch occupies residues 104 to 151 (AKLAEKDRQKRQIQALSFDPDDEPDGDDANDGDEGSGKESEKEDVKEE). Residues 122–137 (DPDDEPDGDDANDGDE) show a composition bias toward acidic residues. Positions 138-151 (GSGKESEKEDVKEE) are enriched in basic and acidic residues.

This sequence belongs to the FAM50 family.

The protein is Protein FAM50 homolog of Anopheles gambiae (African malaria mosquito).